The primary structure comprises 992 residues: Exportin-T (992 aa).

Belongs to the exportin family.

It is found in the nucleus. It localises to the cytoplasm. TRNA nucleus export receptor which facilitates tRNA translocation across the nuclear pore complex. Involved in pre-tRNA splicing, probably by affecting the interaction of pre-tRNA with splicing endonuclease. This chain is Exportin-T (LOS1), found in Scheffersomyces stipitis (strain ATCC 58785 / CBS 6054 / NBRC 10063 / NRRL Y-11545) (Yeast).